The following is a 398-amino-acid chain: Nicotinate phosphoribosyltransferase (398 aa).

H214 is subject to Phosphohistidine; by autocatalysis.

This sequence belongs to the NAPRTase family. Transiently phosphorylated on a His residue during the reaction cycle. Phosphorylation strongly increases the affinity for substrates and increases the rate of nicotinate D-ribonucleotide production. Dephosphorylation regenerates the low-affinity form of the enzyme, leading to product release.

The enzyme catalyses nicotinate + 5-phospho-alpha-D-ribose 1-diphosphate + ATP + H2O = nicotinate beta-D-ribonucleotide + ADP + phosphate + diphosphate. It functions in the pathway cofactor biosynthesis; NAD(+) biosynthesis; nicotinate D-ribonucleotide from nicotinate: step 1/1. Catalyzes the synthesis of beta-nicotinate D-ribonucleotide from nicotinate and 5-phospho-D-ribose 1-phosphate at the expense of ATP. The sequence is that of Nicotinate phosphoribosyltransferase from Xanthomonas campestris pv. campestris (strain 8004).